The sequence spans 145 residues: Cystatin-like 1 (145 aa).

Positions 1–19 (MGIGCWRNPLLLLIALVLS) are cleaved as a signal peptide. Residues 37–115 (SKKNMNSTLN…KKLRKSLICE (79 aa)) form the Cystatin domain. An N-linked (GlcNAc...) asparagine glycan is attached at Asn-42. Intrachain disulfides connect Cys-91–Cys-101 and Cys-114–Cys-134.

Belongs to the cystatin family.

The protein resides in the secreted. The chain is Cystatin-like 1 (CSTL1) from Homo sapiens (Human).